A 50-amino-acid polypeptide reads, in one-letter code: Defensin D2 (50 aa).

Disulfide bonds link C3–C50, C14–C35, C20–C44, and C24–C46.

Post-translationally, contains 4 disulfide bonds.

The protein resides in the secreted. Its function is as follows. Antimicrobial peptide active against fungi, Gram-positive and Gram-negative bacteria. Inhibits growth of hyphae in the fungi A.niger (IC(50)=3.5 ug/ml), B.sorokiniana (IC(50)=1.8 ug/ml), F.oxysporum (IC(50)=5.3 ug/ml), F.graminearum (IC(50)=6.9 ug/ml), F.culmorum (IC(50)=6.9 ug/ml) and B.cinerea (IC(50)=13.7 ug/ml). Has no effect on spore germination. Destroys spores in germinated conidia by disruption of cell walls and membranes in A.niger and B.sorokiniana. Causes vacuolization of germinated macro- and microconidia in F.oxysporum, F.graminearum and F.culmorum. Strongly inhibits growth of P.infestans on potato tubers above concentrations of 3.4 ug/ml. Inhibits growth of Gram-positive bacteria C.michiganensis and B.subtilis and of Gram-negative bacteria P.syringae, E.carotovora and E.coli. In Nigella sativa (Black cumin), this protein is Defensin D2.